We begin with the raw amino-acid sequence, 338 residues long: Protein REG2 (338 aa).

A disordered region spans residues 1–21 (MTLSNCDSLDNLFQDPPEEEE).

In terms of biological role, regulatory subunit, binds to type-1 protein phosphatase. Functions with HEX2/REG1 and SNF1 protein kinase to regulate growth. Might regulate SNF1 directly or indirectly. The polypeptide is Protein REG2 (REG2) (Saccharomyces cerevisiae (strain ATCC 204508 / S288c) (Baker's yeast)).